The chain runs to 257 residues: Pyridoxal phosphate homeostasis protein (257 aa).

Ser-2 is modified (N-acetylserine). At Lys-49 the chain carries N6-(pyridoxal phosphate)lysine.

Belongs to the pyridoxal phosphate-binding protein YggS/PROSC family.

The protein localises to the cytoplasm. It localises to the nucleus. Pyridoxal 5'-phosphate (PLP)-binding protein, which may be involved in intracellular homeostatic regulation of pyridoxal 5'-phosphate (PLP), the active form of vitamin B6. In Saccharomyces cerevisiae (strain ATCC 204508 / S288c) (Baker's yeast), this protein is Pyridoxal phosphate homeostasis protein.